A 202-amino-acid chain; its full sequence is Glycerol-3-phosphate acyltransferase (202 aa).

A run of 6 helical transmembrane segments spans residues 2 to 22 (MIIVMLLLSYLIGAFPSGFVI), 54 to 74 (FLVTFLDIFKGFITVFFPLWL), 85 to 105 (FFTNGLIVGLFAILGHVYPVY), 120 to 140 (VVLGVNPILLLILAIIFFIIL), 141 to 161 (KIFKYVSLASIVAAICCVIGS), and 162 to 182 (LIIQDYILLVVSFLVSIILII).

It belongs to the PlsY family. In terms of assembly, probably interacts with PlsX.

The protein resides in the cell membrane. The catalysed reaction is an acyl phosphate + sn-glycerol 3-phosphate = a 1-acyl-sn-glycero-3-phosphate + phosphate. The protein operates within lipid metabolism; phospholipid metabolism. In terms of biological role, catalyzes the transfer of an acyl group from acyl-phosphate (acyl-PO(4)) to glycerol-3-phosphate (G3P) to form lysophosphatidic acid (LPA). This enzyme utilizes acyl-phosphate as fatty acyl donor, but not acyl-CoA or acyl-ACP. This chain is Glycerol-3-phosphate acyltransferase, found in Staphylococcus aureus (strain bovine RF122 / ET3-1).